The following is a 957-amino-acid chain: Collagen alpha-1(XXI) chain (957 aa).

An N-terminal signal peptide occupies residues 1–16 (MPGIIYILCSILLIES). Residues 37–211 (DLVFILDGSW…RIREIMKQKL (175 aa)) form the VWFA domain. The Laminin G-like domain occupies 230-412 (GFDILLGLGI…LQKLRIYCDP (183 aa)). Disordered stretches follow at residues 441–788 (PAPC…GKEQ) and 820–935 (CKTQ…DAGI). Collagen-like domains lie at 448-501 (PGEK…PRGF), 502-543 (AGLK…DKGD), 544-591 (IGID…EEGK), 592-642 (PGPP…ISGP), 643-684 (EGIS…IPGQ), 685-741 (QGYT…EIGE), 742-786 (HGHR…QQGK), and 825-882 (GSPG…GNKG). A compositionally biased stretch (low complexity) spans 483–498 (TSGSPGIPGSPGVQGP). A compositionally biased stretch (basic and acidic residues) spans 535–556 (MGPKGDKGDIGIDGKKGTKGDK). 2 stretches are compositionally biased toward low complexity: residues 597–616 (MEGL…DGAN) and 633–649 (PTGT…SGPQ). A compositionally biased stretch (basic and acidic residues) spans 733–744 (KGEKGEIGEHGH). Over residues 775–786 (QGLPGPKGQQGK) the composition is skewed to low complexity.

It belongs to the fibril-associated collagens with interrupted helices (FACIT) family.

The protein localises to the secreted. The protein resides in the extracellular space. It is found in the extracellular matrix. It localises to the cytoplasm. This Xenopus laevis (African clawed frog) protein is Collagen alpha-1(XXI) chain (col21a1).